Consider the following 196-residue polypeptide: Nitrogen regulatory protein P-II homolog (196 aa).

Residues 1-61 constitute a chloroplast transit peptide; that stretch reads MAASMTKPIS…NNSRVLPVVS (61 aa). ATP-binding positions include 108–112 and 161–164; these read GFGAQ and GDGK. Gly-110 serves as a coordination point for Mg(2+).

It belongs to the P(II) protein family. In terms of assembly, homodimer. Interacts with NAGK. Interaction with NAGK is dependent of MgATP and inhibited by 2-oxoglutarate, arginine, glutamate, citrate, and oxaloacetate.

It is found in the plastid. It localises to the chloroplast. Participates in sensing carbon and organic nitrogen status and regulates some steps of primary carbon and nitrogen metabolism. Required for nitrite uptake in chloroplasts and regulates arginine biosynthesis through interaction with acetylglutamate kinase (NAGK) in chloroplasts. Regulates fatty acids synthesis in chloroplasts by interacting with the acetyl-CoA carboxylase complex and inhibiting acetyl-CoA carboxylase (ACCase) activity. The polypeptide is Nitrogen regulatory protein P-II homolog (GLB1) (Arabidopsis thaliana (Mouse-ear cress)).